Consider the following 1997-residue polypeptide: MALIVHLKTVSELRGKGDRIAKVTFRGQSFYSRVLENCEGVADFDETFRWPVASSIDRNEVLEIQIFNYSKVFSNKLIGTFCMVLQKVVEENRVEVTDTLMDDSNAIIKTSLSMEVRYQATDGTVGPWDDGDFLGDESLQEEKDSQETDGLLPGSRPSTRISGEKSFRRAGRSVFSAMKLGKTRSHKEEPQRQDEPAVLEMEDLDHLAIQLGDGLDPDSVSLASVTALTSNVSNKRSKPDIKMEPSAGRPMDYQVSITVIEARQLVGLNMDPVVCVEVGDDKKYTSMKESTNCPYYNEYFVFDFHVSPDVMFDKIIKISVIHSKNLLRSGTLVGSFKMDVGTVYSQPEHQFHHKWAILSDPDDISAGLKGYVKCDVAVVGKGDNIKTPHKANETDEDDIEGNLLLPEGVPPERQWARFYVKIYRAEGLPRMNTSLMANVKKAFIGENKDLVDPYVQVFFAGQKGKTSVQKSSYEPLWNEQVVFTDLFPPLCKRMKVQIRDSDKVNDVAIGTHFIDLRKISNDGDKGFLPTLGPAWVNMYGSTRNYTLLDEHQDLNEGLGEGVSFRARLMLGLAVEILDTSNPELTSSTEVQVEQATPVSESCTGRMEEFFLFGAFLEASMIDRKNGDKPITFEVTIGNYGNEVDGMSRPLRPRPRKEPGDEEEVDLIQNSSDDEGDEAGDLASVSSTPPMRPQITDRNYFHLPYLERKPCIYIKSWWPDQRRRLYNANIMDHIADKLEEGLNDVQEMIKTEKSYPERRLRGVLEELSCGCHRFLSLSDKDQGRSSRTRLDRERLKSCMRELESMGQQAKSLRAQVKRHTVRDKLRLCQNFLQKLRFLADEPQHSIPDVFIWMMSNNKRIAYARVPSKDLLFSIVEEELGKDCAKVKTLFLKLPGKRGFGSAGWTVQAKLELYLWLGLSKQRKDFLCGLPCGFEEVKAAQGLGLHSFPPISLVYTKKQAFQLRAHMYQARSLFAADSSGLSDPFARVFFINQSQCTEVLNETLCPTWDQMLVFDNLELYGEAHELRDDPPIIVIEIYDQDSMGKADFMGRTFAKPLVKMADEAYCPPRFPPQLEYYQIYRGSATAGDLLAAFELLQIGPSGKADLPPINGPVDMDRGPIMPVPVGIRPVLSKYRVEVLFWGLRDLKRVNLAQVDRPRVDIECAGKGVQSSLIHNYKKNPNFNTLVKWFEVDLPENELLHPPLNIRVVDCRAFGRYTLVGSHAVSSLRRFIYRPPDRSAPNWNTTVRLLRGCHRLRNGGPSSRPTGEVVVSMEPEEPVKKLETMVKLDATSDAVVKVDVAEDEKERKKKKKKGPSEEPEEEEPDESMLDWWSKYFASIDTMKEQLRQHETSGTDLEEKEEMESAEGLKGPMKSKEKSRAAKEEKKKKNQSPGPGQGSEAPEKKKAKIDELKVYPKELESEFDSFEDWLHTFNLLRGKTGDDEDGSTEEERIVGRFKGSLCVYKVPLPEDVSREAGYDPTYGMFQGIPSNDPINVLVRIYVVRATDLHPADINGKADPYIAIKLGKTDIRDKENYISKQLNPVFGKSFDIEASFPMESMLTVAVYDWDLVGTDDLIGETKIDLENRFYSKHRATCGIAQTYSIHGYNIWRDPMKPSQILTRLCKEGKVDGPHFGPHGRVRVANRVFTGPSEIEDENGQRKPTDEHVALSALRHWEDIPRVGCRLVPEHVETRPLLNPDKPGIEQGRLELWVDMFPMDMPAPGTPLDISPRKPKKYELRVIVWNTDEVVLEDDDFFTGEKSSDIFVRGWLKGQQEDKQDTDVHYHSLTGEGNFNWRYLFPFDYLAAEEKIVMSKKESMFSWDETEYKIPARLTLQIWDADHFSADDFLGAIELDLNRFPRGAKTAKQCTMEMATGEVDVPLVSIFKQKRVKGWWPLLARNENDEFELTGKVEAELHLLTAEEAEKNPVGLARNEPDPLEKPNRPDTSFIWFLNPLKSARYFLWHTYRWLLLKFLLLFLLLLLFALFLYSLPGYLAKKILGA.

The C2 1 domain maps to 1–98; sequence MALIVHLKTV…VEENRVEVTD (98 aa). At 1 to 1963 the chain is on the cytoplasmic side; the sequence is MALIVHLKTV…ARYFLWHTYR (1963 aa). Positions 140-167 are disordered; the sequence is QEEKDSQETDGLLPGSRPSTRISGEKSF. 2 consecutive C2 domains span residues 235–356 and 399–530; these read KRSK…HKWA and IEGN…FLPT. Residues 643 to 692 are disordered; that stretch reads VDGMSRPLRPRPRKEPGDEEEVDLIQNSSDDEGDEAGDLASVSSTPPMRP. Acidic residues predominate over residues 659 to 679; that stretch reads GDEEEVDLIQNSSDDEGDEAG. The stretch at 791-820 forms a coiled coil; sequence RERLKSCMRELESMGQQAKSLRAQVKRHTV. C2 domains follow at residues 943–1068 and 1115–1241; these read LHSF…PPRF and RGPI…PNWN. Ca(2+)-binding residues include D975, D981, D1037, D1039, and D1045. Disordered regions lie at residues 1253–1272, 1296–1326, and 1343–1402; these read LRNG…SMEP, DVAE…ESML, and LRQH…EKKK. Acidic residues-rich tracts occupy residues 1314–1325 and 1352–1361; these read EEPEEEEPDESM and DLEEKEEMES. Basic and acidic residues predominate over residues 1370 to 1383; that stretch reads KSKEKSRAAKEEKK. C2 domains lie at 1464-1593 and 1714-1865; these read LPED…ATCG and DMPA…KQCT. Ca(2+)-binding residues include D1508, D1514, D1563, D1565, D1571, D1836, S1839, and D1842. Residues 1964–1984 traverse the membrane as a helical segment; that stretch reads WLLLKFLLLFLLLLLFALFLY. At 1985–1997 the chain is on the extracellular side; it reads SLPGYLAKKILGA.

Belongs to the ferlin family. In terms of assembly, interacts with SNAP25; the interaction is direct. Interacts with STX1; the interaction is direct. Interacts with RAB8B. Ca(2+) is required as a cofactor. Isoform 1 is expressed in cochlea and brain. Expressed in the cochlear and vestibular hair cells. Expressed in both inner and outer hair cells (IHCs and OHCs) and cochlear ganglions neurons at postnatal day 2 (P2) and 6 (P6). Expressed only in IHCs at postnatal day 60 (P60) (at protein level). Strongly expressed in brain and inner ear. In the inner ear, it is mainly expressed in the cochlear IHC and vestibular type I sensory hair cells. Weakly expressed in eye, heart, skeletal muscle, liver, kidney, lung and testis.

The protein resides in the cytoplasmic vesicle. The protein localises to the secretory vesicle. It is found in the synaptic vesicle membrane. Its subcellular location is the basolateral cell membrane. It localises to the endoplasmic reticulum membrane. The protein resides in the golgi apparatus membrane. The protein localises to the presynaptic cell membrane. It is found in the cell membrane. Functionally, key calcium ion sensor involved in the Ca(2+)-triggered synaptic vesicle-plasma membrane fusion and in the control of neurotransmitter release at these output synapses. Interacts in a calcium-dependent manner to the presynaptic SNARE proteins at ribbon synapses of cochlear inner hair cells (IHCs) to trigger exocytosis of neurotransmitter. Also essential to synaptic exocytosis in immature outer hair cells (OHCs). May also play a role within the recycling of endosomes. This chain is Otoferlin (Otof), found in Mus musculus (Mouse).